The primary structure comprises 151 residues: 4-hydroxybenzoyl-CoA thioesterase (151 aa).

Glu73 is a catalytic residue. Residue 100-102 coordinates substrate; that stretch reads FFR.

The protein belongs to the thioesterase PaaI family. As to quaternary structure, homotetramer.

It carries out the reaction 4-hydroxybenzoyl-CoA + H2O = 4-hydroxybenzoate + CoA + H(+). It functions in the pathway xenobiotic degradation; 4-chlorobenzoate degradation; 4-hydroxybenzoate from 4-chlorobenzoate: step 3/3. In Arthrobacter globiformis, this protein is 4-hydroxybenzoyl-CoA thioesterase.